Consider the following 365-residue polypeptide: UDP-N-acetylglucosamine--N-acetylmuramyl-(pentapeptide) pyrophosphoryl-undecaprenol N-acetylglucosamine transferase (365 aa).

UDP-N-acetyl-alpha-D-glucosamine contacts are provided by residues Thr-10 to Gly-12, Asn-128, Arg-170, Ser-199, Ile-250, and Gln-295.

This sequence belongs to the glycosyltransferase 28 family. MurG subfamily.

The protein localises to the cell inner membrane. The enzyme catalyses di-trans,octa-cis-undecaprenyl diphospho-N-acetyl-alpha-D-muramoyl-L-alanyl-D-glutamyl-meso-2,6-diaminopimeloyl-D-alanyl-D-alanine + UDP-N-acetyl-alpha-D-glucosamine = di-trans,octa-cis-undecaprenyl diphospho-[N-acetyl-alpha-D-glucosaminyl-(1-&gt;4)]-N-acetyl-alpha-D-muramoyl-L-alanyl-D-glutamyl-meso-2,6-diaminopimeloyl-D-alanyl-D-alanine + UDP + H(+). The protein operates within cell wall biogenesis; peptidoglycan biosynthesis. Cell wall formation. Catalyzes the transfer of a GlcNAc subunit on undecaprenyl-pyrophosphoryl-MurNAc-pentapeptide (lipid intermediate I) to form undecaprenyl-pyrophosphoryl-MurNAc-(pentapeptide)GlcNAc (lipid intermediate II). This chain is UDP-N-acetylglucosamine--N-acetylmuramyl-(pentapeptide) pyrophosphoryl-undecaprenol N-acetylglucosamine transferase, found in Pelodictyon phaeoclathratiforme (strain DSM 5477 / BU-1).